The following is a 518-amino-acid chain: Xylose import ATP-binding protein XylG (518 aa).

ABC transporter domains follow at residues 6–245 (LQMN…VGRE) and 262–507 (FEAR…LSHS). 38–45 (GENGAGKS) is an ATP binding site.

Belongs to the ABC transporter superfamily. Xylose importer (TC 3.A.1.2.4) family. The complex is composed of two ATP-binding proteins (XylG), two transmembrane proteins (XylH) and a solute-binding protein (XylF).

It is found in the cell inner membrane. The enzyme catalyses D-xylose(out) + ATP + H2O = D-xylose(in) + ADP + phosphate + H(+). In terms of biological role, part of the ABC transporter complex XylFGH involved in xylose import. Responsible for energy coupling to the transport system. In Pseudomonas syringae pv. syringae (strain B728a), this protein is Xylose import ATP-binding protein XylG.